The chain runs to 511 residues: Protein HESO1 (511 aa).

Positions 378 to 511 are disordered; the sequence is ARPQNQQMQQ…GQIWRPRHEQ (134 aa). Residues 381 to 392 show a composition bias toward low complexity; the sequence is QNQQMQQNWSQS. Positions 404 to 465 are enriched in polar residues; sequence LTQSRPQQNW…TSAGSSQNQG (62 aa).

Belongs to the DNA polymerase type-B-like family.

It is found in the cytoplasm. The protein resides in the P-body. It localises to the nucleus. It catalyses the reaction RNA(n) + UTP = RNA(n)-3'-uridine ribonucleotide + diphosphate. Completely inhibited by 2'-O-methylation on the substrate RNA. Uridylates small RNAs to trigger their degradation. Catalyzes the uridylation of 5' fragments produced by AGO1-mediated cleavage of miRNA target RNAs. Acts synergistically with URT1 in unmethylated miRNA uridylation, leading to their degradation. URT1 and HESO1 prefer substrates with different 3' end nucleotides and act cooperatively to tail different forms of the same miRNAs. URT1 and HESO1 act sequentially, with URT1 mono-uridylating the miRNAs followed by their further uridylation by HESO1. URT1 and HESO1 are involved in the uridylation and clearance of RISC-generated 5' mRNA fragments. Able to act on AGO1-bound miRNAs and the uridylated species stay associated with AGO1. The chain is Protein HESO1 from Arabidopsis thaliana (Mouse-ear cress).